The sequence spans 622 residues: Pyranose 2-oxidase (622 aa).

Positions 1–28 (MSASSSDPFHSFAKTSFTSKAAKRATAH) are cleaved as a signal peptide. Positions 29-37 (SLPPLPGPG) are excised as a propeptide. At His167 the chain carries Tele-8alpha-FAD histidine. 2 residues coordinate substrate: Gln449 and His451. Residue His546 is the Proton acceptor of the active site. The active site involves Asn591.

Belongs to the GMC oxidoreductase family. As to quaternary structure, homotetramer. FAD is required as a cofactor.

It is found in the periplasm. The enzyme catalyses D-glucose + O2 = 2-dehydro-D-glucose + H2O2. In terms of biological role, catalyzes the oxidation of various aldopyranoses and disaccharides on carbon-2 to the corresponding 2-keto sugars concomitant with the reduction of O(2) to H(2)O(2). Plays an important role in lignin degradation of wood rot fungi by supplying the essential cosubstrate H(2)O(2) for the ligninolytic peroxidases, lignin peroxidase and manganese-dependent peroxidase. The preferred substrate is D-glucose which is converted to 2-dehydro-D-glucose, an intermediate of a secondary metabolic pathway leading to the antibiotic cortalcerone. Also acts on D-xylose, together with D-glucose the major sugars derived from wood, on L-sorbose, D-galactose and 1,5-anhydroglucitol, a diagnostic marker of diabetes mellitus. This Trametes hirsuta (White-rot fungus) protein is Pyranose 2-oxidase (P2OX).